A 95-amino-acid chain; its full sequence is Small ribosomal subunit protein uS19 (95 aa).

The protein belongs to the universal ribosomal protein uS19 family.

Functionally, protein S19 forms a complex with S13 that binds strongly to the 16S ribosomal RNA. The chain is Small ribosomal subunit protein uS19 (rpsS) from Treponema pallidum (strain Nichols).